The sequence spans 211 residues: FMN-dependent NADH:quinone oxidoreductase (211 aa).

FMN contacts are provided by residues 17 to 19 (SYS) and 99 to 102 (MWNF).

It belongs to the azoreductase type 1 family. As to quaternary structure, homodimer. FMN serves as cofactor.

It catalyses the reaction 2 a quinone + NADH + H(+) = 2 a 1,4-benzosemiquinone + NAD(+). The enzyme catalyses N,N-dimethyl-1,4-phenylenediamine + anthranilate + 2 NAD(+) = 2-(4-dimethylaminophenyl)diazenylbenzoate + 2 NADH + 2 H(+). In terms of biological role, quinone reductase that provides resistance to thiol-specific stress caused by electrophilic quinones. Functionally, also exhibits azoreductase activity. Catalyzes the reductive cleavage of the azo bond in aromatic azo compounds to the corresponding amines. The sequence is that of FMN-dependent NADH:quinone oxidoreductase from Exiguobacterium sp. (strain ATCC BAA-1283 / AT1b).